The chain runs to 603 residues: Cdc42-interacting protein 4 (603 aa).

Residues 1-117 are required for podosome formation and interaction with AKAP9 and microtubules; it reads MDWGTELWDQ…EMKQERKMHF (117 aa). The interval 1 to 117 is required for translocation to the plasma membrane in response to insulin; it reads MDWGTELWDQ…EMKQERKMHF (117 aa). The 264-residue stretch at 1–264 folds into the F-BAR domain; sequence MDWGTELWDQ…AAESVDAKND (264 aa). A coiled-coil region spans residues 67-259; it reads FSQQQSFVQL…EGMKVAAESV (193 aa). The interaction with CDC42 stretch occupies residues 293–539; it reads RVPSDSSLGT…YTEFDEDFEE (247 aa). Residues 293–603 are interaction with PDE6G; it reads RVPSDSSLGT…PTSYLRVTLN (311 aa). The interval 295–358 is disordered; sequence PSDSSLGTPD…PSSPRSGRDP (64 aa). Phosphoserine is present on residues S296, S298, and S299. The span at 316-329 shows a compositional bias: basic residues; it reads SRAKRWPFGKKNKP. The segment covering 333–346 has biased composition (low complexity); that stretch reads SLSLLGGHLPSTLS. S335 and S351 each carry phosphoserine. Residues 388–481 are a coiled coil; that stretch reads TEDFSHLPPE…ESRVLSNRGD (94 aa). An REM-1 domain is found at 393-470; it reads HLPPEQQRKR…VQKYEAWLAE (78 aa). Positions 471–603 are required for interaction with FASLG and localization to lysosomes; the sequence is AESRVLSNRG…PTSYLRVTLN (133 aa). The segment at 477-541 is disordered; sequence SNRGDSLSRH…EFDEDFEEPA (65 aa). At S482 the chain carries Phosphoserine. The interaction with DNM2 and WASL stretch occupies residues 487 to 543; sequence ARPPDPPTTAPPDSSSSSTNSGSQDNKESSSEEPPSEGQDTPIYTEFDEDFEEPASP. The span at 497-510 shows a compositional bias: low complexity; it reads PPDSSSSSTNSGSQ. The interaction with DNM1 and WASL stretch occupies residues 532 to 603; that stretch reads EFDEDFEEPA…PTSYLRVTLN (72 aa). Positions 540 to 603 are required for podosome formation; that stretch reads PASPIGQCVA…PTSYLRVTLN (64 aa). Residues 542–603 enclose the SH3 domain; the sequence is SPIGQCVAIY…PTSYLRVTLN (62 aa). The segment at 546 to 603 is interaction with WAS; it reads QCVAIYHFEGSSEGTVSMSEGEDLSLMEEDKGDGWTRVRRKQGAEGYVPTSYLRVTLN. Positions 548–603 are interaction with ARHGAP17, DAAM1, DIAPH1 and DIAPH2; that stretch reads VAIYHFEGSSEGTVSMSEGEDLSLMEEDKGDGWTRVRRKQGAEGYVPTSYLRVTLN.

Belongs to the FNBP1 family. Homodimerizes, the dimers can polymerize end-to-end to form filamentous structures. Interacts with AKAP9, ARHGAP17, DAAM1, DIAPH1, DIAPH2, DNM1, FASLG/FASL, GAPVD1, LYN, microtubules, PDE6G, SRC and WAS/WASP. Interacts with the ligand binding domain of the thyroid receptor (TR) in the presence of thyroid hormone. May interact with CTNNB1 and HD/HTT. Interacts specifically with GTP-bound CDC42 and RHOQ. Interacts with DNM2 and WASL. Tyrosine phosphorylated. Also phosphorylated by PKA.

It is found in the cytoplasm. The protein resides in the cytoskeleton. Its subcellular location is the cell cortex. The protein localises to the lysosome. It localises to the golgi apparatus. It is found in the cell membrane. The protein resides in the cell projection. Its subcellular location is the phagocytic cup. Required to coordinate membrane tubulation with reorganization of the actin cytoskeleton during endocytosis. Binds to lipids such as phosphatidylinositol 4,5-bisphosphate and phosphatidylserine and promotes membrane invagination and the formation of tubules. Also promotes CDC42-induced actin polymerization by recruiting WASL/N-WASP which in turn activates the Arp2/3 complex. Actin polymerization may promote the fission of membrane tubules to form endocytic vesicles. Required for the formation of podosomes, actin-rich adhesion structures specific to monocyte-derived cells. May be required for the lysosomal retention of FASLG/FASL. Required for translocation of GLUT4 to the plasma membrane in response to insulin signaling. This Mus musculus (Mouse) protein is Cdc42-interacting protein 4 (Trip10).